Reading from the N-terminus, the 195-residue chain is BH3-interacting domain death agonist (195 aa).

Position 1 is an N-acetylmethionine (M1). The span at 58-69 shows a compositional bias: polar residues; it reads TDGSQASRSFNQ. The interval 58–77 is disordered; that stretch reads TDGSQASRSFNQGRIEPDSE. S78 bears the Phosphoserine mark. Residues 87–100 carry the BH3 motif; it reads ARHLAQIGDEMDHN.

As to quaternary structure, forms heterodimers either with the pro-apoptotic protein BAX or the anti-apoptotic protein BCL2. Interacts with PLEKHN1. In terms of assembly, interacts with ITCH. Interacts with MTCH2. In terms of processing, TNF-alpha induces caspase-mediated cleavage into a major p15 and minor p13 and p11 products. Cleaved by CASP6 into a major p15 and minor p13 products, leading to release of cytochrome c and subsequent nonalcoholic steatohepatitis. Ubiquitinated by ITCH; ubiquitination results in proteasome-dependent degradation.

It is found in the cytoplasm. The protein localises to the mitochondrion membrane. The protein resides in the mitochondrion outer membrane. Induces caspases and apoptosis. Counters the protective effect of BCL2. Its function is as follows. Induces caspase activation and apoptosis. Allows the release of cytochrome c. This is BH3-interacting domain death agonist (Bid) from Mus musculus (Mouse).